The sequence spans 103 residues: Large ribosomal subunit protein bL21 (103 aa).

It belongs to the bacterial ribosomal protein bL21 family. Part of the 50S ribosomal subunit. Contacts protein L20.

Its function is as follows. This protein binds to 23S rRNA in the presence of protein L20. This is Large ribosomal subunit protein bL21 from Mycobacterium marinum (strain ATCC BAA-535 / M).